The primary structure comprises 655 residues: MTDKEEEAEGGKKKEPMIGFYDSYQELFEFFCNNTTIHGTIRMVCSKHNNMKTVSWTILFITTFGVMYWQFGLLLGQYYSYPVSITMSVNFDKLIFPAVTVCTLNPYRYNVVSTQLANLDCYTEELLSTLYHYNPLTSGNQSACNSSSTAGTRAFDESYMKLEFLNDENTAYSGPVKGATNSTSPVNHTEFYRIGFKLCNATGEDCFYQTYSSGVDALREWYKFQYINIMAQIPSQSNQEDDSQISNFVYACEFNKVSCGVENYTRFRHPVYGNCYTYNDGQSATPWASFVPGVGNGLSLVLRTEQNDFLPFLSTVAGARVLVHDQNQPPFMEDSGLDIRPGVETSIGMKKEIISRLGGVYGNCTDGSDIDVVNLYNSDYNQQACVRSCFQATIVQQCGCGYYFYPLPSGAEYCSYSRNKSWGYCYYKLYKAFAADELGCFRRCRKPCQYTDYKMTAGYAQWPSSVSESWITSILSQENQYNMTSGRKNIAKLNVYFYELNYQTMGESPSFTVVTLLSNMGSQWSLWFGSSVLSVVEMGELVFDLIAVGVIVLRRRRREKCQASSDGEGTSDSTAGTHRGQENASRSGRDVACNRFVVVAEISPPPAYDTLQLDVPVACAPDCECTQHVSHASVHSQAPCSSQPEQEASEGPTVL.

Residues 1 to 55 (MTDKEEEAEGGKKKEPMIGFYDSYQELFEFFCNNTTIHGTIRMVCSKHNNMKTVS) lie on the Cytoplasmic side of the membrane. A helical membrane pass occupies residues 56-76 (WTILFITTFGVMYWQFGLLLG). The Extracellular segment spans residues 77-531 (QYYSYPVSIT…SQWSLWFGSS (455 aa)). Intrachain disulfides connect C102-C275, C199-C206, C252-C259, C364-C448, C385-C425, C385-C444, C389-C440, C398-C425, C398-C448, and C400-C414. A helical transmembrane segment spans residues 532 to 552 (VLSVVEMGELVFDLIAVGVIV). Over 553–655 (LRRRRREKCQ…QEASEGPTVL (103 aa)) the chain is Cytoplasmic. The disordered stretch occupies residues 561–587 (CQASSDGEGTSDSTAGTHRGQENASRS). The segment covering 562 to 586 (QASSDGEGTSDSTAGTHRGQENASR) has biased composition (polar residues).

This sequence belongs to the amiloride-sensitive sodium channel (TC 1.A.6) family. SCNN1A subfamily. In terms of assembly, heterotrimer; containing an alpha/SCNN1A, a beta/SCNN1B and a gamma/SCNN1G subunit. Strongly expressed in gill, kidney and rectum (at protein level). More weakly expressed in muscle, brain, heart, liver and intestine.

The protein resides in the apical cell membrane. The protein localises to the cell projection. Its subcellular location is the cilium. It is found in the cytoplasmic granule. It localises to the cytoplasm. The protein resides in the cytoplasmic vesicle. The protein localises to the secretory vesicle. Its subcellular location is the acrosome. It is found in the flagellum. The enzyme catalyses Na(+)(in) = Na(+)(out). Originally identified and characterized by its inhibition by the diuretic drug amiloride. Its function is as follows. This is one of the three pore-forming subunits of the heterotrimeric epithelial sodium channel (ENaC), a critical regulator of sodium balance and fluid homeostasis. ENaC operates in epithelial tissues, where it mediates the electrodiffusion of sodium ions from extracellular fluid through the apical membrane of cells, with water following osmotically. The sequence is that of Epithelial sodium channel subunit alpha (scnn1a) from Neoceratodus forsteri (Australian lungfish).